The chain runs to 71 residues: UPF0337 protein PPA1427 (71 aa).

A disordered region spans residues 20 to 46 (EKIGGLTDDSDLKSAGADQKASGKVAQ).

This sequence belongs to the UPF0337 (CsbD) family.

The protein is UPF0337 protein PPA1427 of Cutibacterium acnes (strain DSM 16379 / KPA171202) (Propionibacterium acnes).